The chain runs to 133 residues: Small ribosomal subunit protein uS8 (133 aa).

It belongs to the universal ribosomal protein uS8 family. Part of the 30S ribosomal subunit. Contacts proteins S5 and S12.

One of the primary rRNA binding proteins, it binds directly to 16S rRNA central domain where it helps coordinate assembly of the platform of the 30S subunit. The sequence is that of Small ribosomal subunit protein uS8 from Mycoplasma mobile (strain ATCC 43663 / 163K / NCTC 11711) (Mesomycoplasma mobile).